Here is an 898-residue protein sequence, read N- to C-terminus: Protein argonaute 1 (898 aa).

Positions 1-52 are disordered; it reads MLALNAGSQYPGRGRGRGRGDGGNRVHKHDGINRYHGGFRGGRGGGGGGFRD. The span at 18-33 shows a compositional bias: basic and acidic residues; that stretch reads GRGDGGNRVHKHDGIN. Gly residues predominate over residues 38–50; the sequence is GFRGGRGGGGGGF. One can recognise a PAZ domain in the interval 283–378; sequence KCSDEMRRLR…IFADRTKMSR (96 aa). The Piwi domain occupies 542–883; it reads FAMVKLRTKE…YARKYGSLKS (342 aa).

Belongs to the argonaute family.

It localises to the cytoplasm. In terms of biological role, involved in RNA-mediated gene silencing (RNAi) of mobile elements and repeats including retroposons SLACS (Spliced Leader Associated Conserved Sequence), TATE (Telomere-Associated Transposable Element) and TAS-like sequences (Telomere Associated Sequence), and a family of 74-nucleotide long tandem repeats, CIR74. Predominantly binds to siRNAs derived from SLACS and TATE transposable elements and to a lesser extent to siRNAs from TAS-like and CIR74 elements. In Leishmania braziliensis, this protein is Protein argonaute 1.